A 205-amino-acid polypeptide reads, in one-letter code: Type III pantothenate kinase (205 aa).

An ATP-binding site is contributed by 5-12 (DIGNTTYH). Substrate contacts are provided by residues Y68 and 72–75 (GIDR). The Proton acceptor role is filled by D74. K(+) is bound at residue D89. S92 contributes to the ATP binding site. S144 contacts substrate.

The protein belongs to the type III pantothenate kinase family. As to quaternary structure, homodimer. NH4(+) serves as cofactor. The cofactor is K(+).

The protein localises to the cytoplasm. It carries out the reaction (R)-pantothenate + ATP = (R)-4'-phosphopantothenate + ADP + H(+). It participates in cofactor biosynthesis; coenzyme A biosynthesis; CoA from (R)-pantothenate: step 1/5. Catalyzes the phosphorylation of pantothenate (Pan), the first step in CoA biosynthesis. In Sulfurimonas denitrificans (strain ATCC 33889 / DSM 1251) (Thiomicrospira denitrificans (strain ATCC 33889 / DSM 1251)), this protein is Type III pantothenate kinase.